Here is a 542-residue protein sequence, read N- to C-terminus: Chaperonin GroEL 3 (542 aa).

Residues 30–33, lysine 51, 87–91, glycine 415, and aspartate 496 each bind ATP; these read TLGP and DGTTT.

This sequence belongs to the chaperonin (HSP60) family. Forms a cylinder of 14 subunits composed of two heptameric rings stacked back-to-back. Interacts with the co-chaperonin GroES.

The protein resides in the cytoplasm. It catalyses the reaction ATP + H2O + a folded polypeptide = ADP + phosphate + an unfolded polypeptide.. Together with its co-chaperonin GroES, plays an essential role in assisting protein folding. The GroEL-GroES system forms a nano-cage that allows encapsulation of the non-native substrate proteins and provides a physical environment optimized to promote and accelerate protein folding. This Rhizobium johnstonii (strain DSM 114642 / LMG 32736 / 3841) (Rhizobium leguminosarum bv. viciae) protein is Chaperonin GroEL 3.